Here is a 442-residue protein sequence, read N- to C-terminus: 3-phosphoshikimate 1-carboxyvinyltransferase (442 aa).

3 residues coordinate 3-phosphoshikimate: K23, S24, and R28. Phosphoenolpyruvate is bound at residue K23. Residues G95 and R123 each coordinate phosphoenolpyruvate. 3-phosphoshikimate contacts are provided by S167, Q169, D315, and K342. Q169 contacts phosphoenolpyruvate. The active-site Proton acceptor is D315. Phosphoenolpyruvate contacts are provided by R346 and R390.

The protein belongs to the EPSP synthase family. In terms of assembly, monomer.

It localises to the cytoplasm. The catalysed reaction is 3-phosphoshikimate + phosphoenolpyruvate = 5-O-(1-carboxyvinyl)-3-phosphoshikimate + phosphate. Its pathway is metabolic intermediate biosynthesis; chorismate biosynthesis; chorismate from D-erythrose 4-phosphate and phosphoenolpyruvate: step 6/7. In terms of biological role, catalyzes the transfer of the enolpyruvyl moiety of phosphoenolpyruvate (PEP) to the 5-hydroxyl of shikimate-3-phosphate (S3P) to produce enolpyruvyl shikimate-3-phosphate and inorganic phosphate. The protein is 3-phosphoshikimate 1-carboxyvinyltransferase of Dichelobacter nodosus (strain VCS1703A).